The chain runs to 528 residues: MDMTKTVEEKKTNGTDSVKGVFENSTIPKVPTGQEMGGDGSSTSKLKETLKVADQTPLSVDNGAKSKLDSSDRQVPGVADQTPLSVDNGAKSKLDSSDRQVPGPELKPNVKKSKKKRIQKPAQPSGPNDLKGGTKGSSQVGENVSENYTGISKEAAKQKQKTPKSVKMQSNLADKFKANDTRRSELINKFQQFVHETCLKSDFEYTGRQYFRARSNFFEMIKLASLYDKHLKECMARACTLERERLKRKLLLVRALKPAVDFLTGIISGVPGSGKSTIVRTLLKGEFPAVCALANPALMNDYSGIEGVYGLDDLLLSAVPITSDLLIIDEYTLAESAEILLLQRRLRASMVLLVGDVAQGKATTASSIEYLTLPVIYRSETTYRLGQETASLCSKQGNRMVSKGGRDTVIITDYDGETDETEKNIAFTVDTVRDVKDCGYDCALAIDVQGKEFDSVTLFLRNEDRKALADKHLRLVALSRHKSKLIIRADAEIRQAFLTGDIDLSSKASNSHRYSAKPDEDHSWFKAK.

Over residues 1–13 (MDMTKTVEEKKTN) the composition is skewed to basic and acidic residues. The interval 1–143 (MDMTKTVEEK…TKGSSQVGEN (143 aa)) is disordered. Tandem repeats lie at residues 52–77 (VADQ…QVPG) and 78–103 (VADQ…QVPG). A 2 X 26 AA tandem repeats region spans residues 52–103 (VADQTPLSVDNGAKSKLDSSDRQVPGVADQTPLSVDNGAKSKLDSSDRQVPG). Residues 75 to 491 (VPGVADQTPL…KSKLIIRADA (417 aa)) form an interaction with the suppressor of RNA silencing Gamma-B region. Residues 109-119 (NVKKSKKKRIQ) show a composition bias toward basic residues. Residues 111 to 120 (KKSKKKRIQK) form a nucleolar localization signal region. The (+)RNA virus helicase ATP-binding domain maps to 236 to 379 (ARACTLERER…YLTLPVIYRS (144 aa)). The nuclear localization signal stretch occupies residues 243-254 (RERLKRKLLLVR). 269–276 (GVPGSGKS) lines the ATP pocket. The (+)RNA virus helicase C-terminal domain occupies 380 to 520 (ETTYRLGQET…SHRYSAKPDE (141 aa)). The segment at 508–528 (ASNSHRYSAKPDEDHSWFKAK) is disordered. Over residues 516 to 528 (AKPDEDHSWFKAK) the composition is skewed to basic and acidic residues.

It belongs to the virgaviridae/benyvirus TGB1 movement protein family. As to quaternary structure, homooligomer. Interacts with movement protein TGB3. TGB1-TGB3-TGB2 complex formation is enhanced by ATP hydrolysis. Interacts with the suppressor of RNA silencing Gamma-B (via N-terminus). The cofactor is Mg(2+).

The protein resides in the host cell junction. It is found in the host plasmodesma. Its subcellular location is the host nucleus. It localises to the host cytoplasm. The protein localises to the host nucleolus. The protein resides in the host cytoskeleton. The catalysed reaction is ATP + H2O = ADP + phosphate + H(+). ATPase activity is enhanced by the suppressor of RNA silencing Gamma-B. In terms of biological role, participates in the transport of viral genome to neighboring plant cells directly through plasmodesmata, without any budding. Multifunctional movement protein with RNA-binding, ATPase and helicase activities. Engages in homologous interactions leading to the formation of a ribonucleoprotein complex containing plus-sense viral RNAs (vRNPs). ATPase activity is probably required for vRNPs movement complex assembly. Intracellular delivery of TGBp1-containing vRNPs to plasmodesmata is facilitated by TGBp2 and TGBp3. This Barley stripe mosaic virus (BSMV) protein is Movement protein TGB1.